The sequence spans 983 residues: Probable beta-galactosidase C (983 aa).

A signal peptide spans 1–23 (MRIFSFLFLLLLGILTGQGLVSG). Substrate-binding residues include Tyr82, Asn127, Ala128, Glu129, and Asn187. Glu188 (proton donor) is an active-site residue. N-linked (GlcNAc...) asparagine glycosylation occurs at Asn197. Tyr251 contributes to the substrate binding site. Cys257 and Cys304 are oxidised to a cystine. Residue Asn276 is glycosylated (N-linked (GlcNAc...) asparagine). Glu287 (nucleophile) is an active-site residue. Tyr353 is a binding site for substrate. N-linked (GlcNAc...) asparagine glycosylation is found at Asn391, Asn434, Asn466, Asn516, Asn601, Asn676, Asn714, Asn719, and Asn804.

It belongs to the glycosyl hydrolase 35 family.

It is found in the secreted. It carries out the reaction Hydrolysis of terminal non-reducing beta-D-galactose residues in beta-D-galactosides.. Cleaves beta-linked terminal galactosyl residues from gangliosides, glycoproteins, and glycosaminoglycans. The chain is Probable beta-galactosidase C (lacC) from Neosartorya fischeri (strain ATCC 1020 / DSM 3700 / CBS 544.65 / FGSC A1164 / JCM 1740 / NRRL 181 / WB 181) (Aspergillus fischerianus).